The following is a 101-amino-acid chain: Integration host factor subunit alpha (101 aa).

This sequence belongs to the bacterial histone-like protein family. Heterodimer of an alpha and a beta chain.

In terms of biological role, this protein is one of the two subunits of integration host factor, a specific DNA-binding protein that functions in genetic recombination as well as in transcriptional and translational control. In Maricaulis maris (strain MCS10) (Caulobacter maris), this protein is Integration host factor subunit alpha.